The chain runs to 2909 residues: Micronemal protein 15 (2909 aa).

A signal peptide spans 1–29 (MVFRATREPFRLPLVAAFIALFLLKGVTC). N-linked (GlcNAc...) asparagine glycans are attached at residues asparagine 512, asparagine 563, asparagine 792, asparagine 813, asparagine 986, asparagine 1007, asparagine 1057, asparagine 1142, asparagine 1319, asparagine 1395, and asparagine 1713. The 57-residue stretch at 1755–1811 (TAIVGEWGEWSACTGTCFSQWWTPKRTRTRLVLAELSHSQIPSVSETATCLDLPPCG) folds into the TSP type-1 1 domain. The tract at residues 1937–2073 (RRKGIMSRRR…RSQARNQTPD (137 aa)) is disordered. The span at 1967–1977 (SEQSGKASQNG) shows a compositional bias: polar residues. N-linked (GlcNAc...) asparagine glycosylation is present at asparagine 1976. A compositionally biased stretch (basic residues) spans 1978–1988 (SRRHRASRKQK). The span at 2004 to 2016 (GESTLHGTGTNAY) shows a compositional bias: polar residues. Basic residues predominate over residues 2049-2065 (KARRARRGAGRFRKSRS). An N-linked (GlcNAc...) asparagine glycan is attached at asparagine 2333. The region spanning 2484–2549 (TCDYTEWSEW…EKCDWMPVCP (66 aa)) is the TSP type-1 2 domain. 3 cysteine pairs are disulfide-bonded: cysteine 2485–cysteine 2528, cysteine 2496–cysteine 2500, and cysteine 2542–cysteine 2548. The interval 2552–2587 (EGEEEDDATGGVEPRGEPIVPPWSPERPTDENNQAM) is disordered. A glycan (N-linked (GlcNAc...) asparagine) is linked at asparagine 2706. A helical membrane pass occupies residues 2709 to 2729 (TWVICLLLGVGGGICFVLSCV). N-linked (GlcNAc...) asparagine glycosylation is found at asparagine 2751, asparagine 2768, and asparagine 2793. A disordered region spans residues 2759 to 2846 (ESHKLRRQGN…IGQTSPTQQR (88 aa)). Residues 2801 to 2815 (PEEEPWQFEDRDEEP) are compositionally biased toward acidic residues. The span at 2837–2846 (IGQTSPTQQR) shows a compositional bias: polar residues.

In terms of assembly, component of a complex, at least composed of cysteine repeat modular protein A (CRMPa), cysteine repeat modular protein B (CRMPb), micronemal protein 15 (MIC15) and thrombospondin type 1 domain-containing protein (TSP1).

It localises to the membrane. Required for rhoptry secretion. Plays a role in host cell invasion. In Toxoplasma gondii, this protein is Micronemal protein 15.